Reading from the N-terminus, the 105-residue chain is Flagellar transcriptional regulator FlhD (105 aa).

The protein belongs to the FlhD family. Homodimer; disulfide-linked. Forms a heterohexamer composed of two FlhC and four FlhD subunits. Each FlhC binds a FlhD dimer, forming a heterotrimer, and a hexamer assembles by dimerization of two heterotrimers.

Its subcellular location is the cytoplasm. Functionally, functions in complex with FlhC as a master transcriptional regulator that regulates transcription of several flagellar and non-flagellar operons by binding to their promoter region. Activates expression of class 2 flagellar genes, including fliA, which is a flagellum-specific sigma factor that turns on the class 3 genes. Also regulates genes whose products function in a variety of physiological pathways. The sequence is that of Flagellar transcriptional regulator FlhD from Nitrosomonas europaea (strain ATCC 19718 / CIP 103999 / KCTC 2705 / NBRC 14298).